The following is a 505-amino-acid chain: Catalase (505 aa).

Positions 1–25 (MSKQDGKLTGLFGAPVSDRENSMTA) are disordered. Catalysis depends on residues H56 and N129. Y339 contributes to the heme binding site.

It belongs to the catalase family. Homodimer. Requires heme as cofactor.

The catalysed reaction is 2 H2O2 = O2 + 2 H2O. Its function is as follows. Decomposes hydrogen peroxide into water and oxygen; serves to protect cells from the toxic effects of hydrogen peroxide. The protein is Catalase (katA) of Staphylococcus warneri.